The primary structure comprises 372 residues: Homeobox protein Nkx-2.1 (372 aa).

Residues 161–220 (RRKRRVLFSQAQVYELERRFKQQKYLSAPEREHLASMIHLTPTQVKIWFQNHRYKMKRQA) constitute a DNA-binding region (homeobox). Disordered stretches follow at residues 219 to 258 (QAKD…SPRR), 269 to 288 (KPCQ…SHAQ), and 312 to 340 (AGLG…SPAG). Residues 233-244 (SGGGGGGGGGAG) are compositionally biased toward gly residues. Low complexity predominate over residues 245-254 (CPQQQQAQQQ). Ser255 carries the phosphoserine modification. The segment covering 273–288 (AGAPAPGAASLQSHAQ) has biased composition (low complexity).

It belongs to the NK-2 homeobox family. In terms of assembly, interacts with WWTR1. Phosphorylated on serine residues by STK3/MST2. In terms of tissue distribution, thyroid, lung and brain.

The protein localises to the nucleus. Transcription factor that binds and activates the promoter of thyroid specific genes such as thyroglobulin, thyroperoxidase, and thyrotropin receptor. Crucial in the maintenance of the thyroid differentiation phenotype. May play a role in lung development and surfactant homeostasis. Forms a regulatory loop with GRHL2 that coordinates lung epithelial cell morphogenesis and differentiation. Activates the transcription of GNRHR and plays a role in enhancing the circadian oscillation of its gene expression. Represses the transcription of the circadian transcriptional repressor NR1D1. The protein is Homeobox protein Nkx-2.1 of Mus musculus (Mouse).